A 315-amino-acid polypeptide reads, in one-letter code: Ribose-phosphate pyrophosphokinase (315 aa).

ATP is bound by residues 37–39 (DGE) and 96–97 (RQ). Mg(2+) is bound by residues His-131 and Asp-170. Lys-194 is an active-site residue. Residues Arg-196, Asp-220, and 224 to 228 (DTGGT) each bind D-ribose 5-phosphate.

Belongs to the ribose-phosphate pyrophosphokinase family. Class I subfamily. In terms of assembly, homohexamer. Mg(2+) serves as cofactor.

It localises to the cytoplasm. It carries out the reaction D-ribose 5-phosphate + ATP = 5-phospho-alpha-D-ribose 1-diphosphate + AMP + H(+). It functions in the pathway metabolic intermediate biosynthesis; 5-phospho-alpha-D-ribose 1-diphosphate biosynthesis; 5-phospho-alpha-D-ribose 1-diphosphate from D-ribose 5-phosphate (route I): step 1/1. Involved in the biosynthesis of the central metabolite phospho-alpha-D-ribosyl-1-pyrophosphate (PRPP) via the transfer of pyrophosphoryl group from ATP to 1-hydroxyl of ribose-5-phosphate (Rib-5-P). The chain is Ribose-phosphate pyrophosphokinase from Yersinia pestis.